The sequence spans 345 residues: MDEQRSKALSAALSQIDKQFGKGAVMRLGDHNAIKDIEVYSTGSLGLDLALGVGGLPRGRVVEIYGPESSGKTTLTLHAIASCQAAGGTAAFIDAEHALDPGYAHKLGVDLENLLISQPDTGEQALEIADMLVRSGAVDLIVIDSVAALTPKAEIEGDMGDSHVGLQARLMSQALRKLTANISRTNTLVIFINQIRMKIGVMYGSPETTTGGNALKFYASVRLDIRRIGAIKKSDEVVGNDTRVKVVKNKVAPPFREAEFAIYYGEGISRLSELVDLGVKFDIVEKSGAWYSYQGERIGQGKDNARQYLKEHPELAANIEQRIRAAAAGHPLAFAEEVAEPAAVG.

Residue 66-73 (GPESSGKT) coordinates ATP.

Belongs to the RecA family.

It is found in the cytoplasm. Functionally, can catalyze the hydrolysis of ATP in the presence of single-stranded DNA, the ATP-dependent uptake of single-stranded DNA by duplex DNA, and the ATP-dependent hybridization of homologous single-stranded DNAs. It interacts with LexA causing its activation and leading to its autocatalytic cleavage. This is Protein RecA from Acidithiobacillus ferrooxidans (strain ATCC 23270 / DSM 14882 / CIP 104768 / NCIMB 8455) (Ferrobacillus ferrooxidans (strain ATCC 23270)).